A 223-amino-acid polypeptide reads, in one-letter code: Endonuclease V (223 aa).

Mg(2+) contacts are provided by Asp-35 and Asp-103.

This sequence belongs to the endonuclease V family. Requires Mg(2+) as cofactor.

Its subcellular location is the cytoplasm. The catalysed reaction is Endonucleolytic cleavage at apurinic or apyrimidinic sites to products with a 5'-phosphate.. In terms of biological role, DNA repair enzyme involved in the repair of deaminated bases. Selectively cleaves double-stranded DNA at the second phosphodiester bond 3' to a deoxyinosine leaving behind the intact lesion on the nicked DNA. This Salmonella agona (strain SL483) protein is Endonuclease V.